Reading from the N-terminus, the 127-residue chain is Small ribosomal subunit protein uS13 (127 aa).

It belongs to the universal ribosomal protein uS13 family. In terms of assembly, part of the 30S ribosomal subunit. Forms a loose heterodimer with protein S19. Forms two bridges to the 50S subunit in the 70S ribosome.

Its function is as follows. Located at the top of the head of the 30S subunit, it contacts several helices of the 16S rRNA. In the 70S ribosome it contacts the 23S rRNA (bridge B1a) and protein L5 of the 50S subunit (bridge B1b), connecting the 2 subunits; these bridges are implicated in subunit movement. Contacts the tRNAs in the A and P-sites. The polypeptide is Small ribosomal subunit protein uS13 (Pelagibacter ubique (strain HTCC1062)).